The following is a 336-amino-acid chain: HTH-type transcriptional repressor PurR (336 aa).

The HTH lacI-type domain maps to 2–56 (ATIKDVAKMAGVSTTTVSHVINKTRFVAKDTEEAVLSAIKQLNYSPSAVARSLKV). Positions 4 to 23 (IKDVAKMAGVSTTTVSHVIN) form a DNA-binding region, H-T-H motif. The DNA-binding element occupies 48–56 (SAVARSLKV). Positions 73, 188, 190, 219, and 273 each coordinate hypoxanthine.

In terms of assembly, homodimer.

It participates in purine metabolism; purine nucleotide biosynthesis [regulation]. In terms of biological role, is the main repressor of the genes involved in the de novo synthesis of purine nucleotides, regulating purB, purC, purEK, purF, purHD, purL, purMN and guaBA expression. PurR is allosterically activated to bind its cognate DNA by binding the purine corepressors, hypoxanthine or guanine, thereby effecting transcription repression. The chain is HTH-type transcriptional repressor PurR from Haemophilus influenzae (strain 86-028NP).